Consider the following 120-residue polypeptide: UPF0231 protein YacL (120 aa).

Belongs to the UPF0231 family.

The protein is UPF0231 protein YacL of Salmonella paratyphi A (strain ATCC 9150 / SARB42).